A 317-amino-acid polypeptide reads, in one-letter code: Tumor-associated calcium signal transducer 2 (317 aa).

The N-terminal stretch at 1 to 24 (MARGLDLAPLLLLLLAMVAGFCTA) is a signal peptide. Residues 25–270 (QINCTCPTNK…QFSMKRLTTG (246 aa)) lie on the Extracellular side of the membrane. N-linked (GlcNAc...) asparagine glycosylation is present at N27. Residues 64-139 (TSKCLLLKAR…TDKGDQSLRC (76 aa)) form the Thyroglobulin type-1 domain. 3 disulfides stabilise this stretch: C67–C102, C113–C119, and C121–C139. N-linked (GlcNAc...) asparagine glycosylation occurs at N114. N-linked (GlcNAc...) asparagine glycans are attached at residues N162 and N202. Residues 271–291 (LIAVIAVVAVALVAGVVVLVV) traverse the membrane as a helical segment. At 292-317 (TNRRKSGKYKKVELKELGEMRSEPSL) the chain is on the cytoplasmic side.

This sequence belongs to the EPCAM family.

It is found in the membrane. May function as a growth factor receptor. This Rattus norvegicus (Rat) protein is Tumor-associated calcium signal transducer 2 (Tacstd2).